A 695-amino-acid chain; its full sequence is F-box only protein 34 (695 aa).

Disordered regions lie at residues 239-275, 316-373, and 472-524; these read GQSRGIPPAPEPFSAPETCEEPKEQENPETGRSQGEP, LTNG…CPSL, and GQDQ…PGGS. Residues 556 to 608 form the F-box domain; it reads QQYMACLPHHIIVKIFRLLPTLSLAILKCTCRYFKSIIEYYNIRPADSRWVRD.

Directly interacts with SKP1 and CUL1.

Functionally, substrate-recognition component of the SCF (SKP1-CUL1-F-box protein)-type E3 ubiquitin ligase complex. This Mus musculus (Mouse) protein is F-box only protein 34 (Fbxo34).